We begin with the raw amino-acid sequence, 296 residues long: Ribosomal RNA small subunit methyltransferase H (296 aa).

S-adenosyl-L-methionine-binding positions include 38-40, Glu-57, Phe-80, Asp-103, and His-110; that span reads GAH.

Belongs to the methyltransferase superfamily. RsmH family.

It is found in the cytoplasm. The enzyme catalyses cytidine(1402) in 16S rRNA + S-adenosyl-L-methionine = N(4)-methylcytidine(1402) in 16S rRNA + S-adenosyl-L-homocysteine + H(+). In terms of biological role, specifically methylates the N4 position of cytidine in position 1402 (C1402) of 16S rRNA. The protein is Ribosomal RNA small subunit methyltransferase H of Borrelia garinii subsp. bavariensis (strain ATCC BAA-2496 / DSM 23469 / PBi) (Borreliella bavariensis).